The primary structure comprises 321 residues: Glutathione synthetase (321 aa).

The ATP-grasp domain occupies 125 to 311 (EKLFTGWFPH…IAGQFIAFLE (187 aa)). An ATP-binding site is contributed by 151 to 208 (FIREQKEVVIKPLGAMAGESIFYLTVNDPNIPVVIETMTANGHQLVMAQRFIPEVKSG). Positions 282 and 284 each coordinate Mg(2+).

The protein belongs to the prokaryotic GSH synthase family. The cofactor is Mg(2+). Mn(2+) serves as cofactor.

The catalysed reaction is gamma-L-glutamyl-L-cysteine + glycine + ATP = glutathione + ADP + phosphate + H(+). Its pathway is sulfur metabolism; glutathione biosynthesis; glutathione from L-cysteine and L-glutamate: step 2/2. The polypeptide is Glutathione synthetase (Coxiella burnetii (strain RSA 493 / Nine Mile phase I)).